A 643-amino-acid polypeptide reads, in one-letter code: Inorganic pyrophosphatase TTM1 (643 aa).

Residues 1-15 constitute a mitochondrion transit peptide; that stretch reads MALDSSVALSPRRRH. A CYTH domain is found at 248-410; the sequence is NPTYILKSSK…PHTYIEQIQL (163 aa). Residues 618-638 form a helical membrane-spanning segment; that stretch reads LESSTVPILLGLAIGCVGIFA.

Requires Mg(2+) as cofactor. Ubiquitously expressed in all tissues, with strong expression detected in senescent leaves.

The protein localises to the mitochondrion outer membrane. It carries out the reaction diphosphate + H2O = 2 phosphate + H(+). Functionally, exhibits pyrophosphatase activity with stronger affinity for pyrophosphate (PPi), moderate affinity for ATP and ADP, and weak affinity for tripolyphosphate (PPPi). No activity observed toward uridine substrate. Positively regulates natural and dark-induced leaf senescence. The chain is Inorganic pyrophosphatase TTM1 from Arabidopsis thaliana (Mouse-ear cress).